Consider the following 151-residue polypeptide: Large ribosomal subunit protein uL13 (151 aa).

The protein belongs to the universal ribosomal protein uL13 family. In terms of assembly, part of the 50S ribosomal subunit.

Functionally, this protein is one of the early assembly proteins of the 50S ribosomal subunit, although it is not seen to bind rRNA by itself. It is important during the early stages of 50S assembly. In Nostoc sp. (strain PCC 7120 / SAG 25.82 / UTEX 2576), this protein is Large ribosomal subunit protein uL13.